Here is a 251-residue protein sequence, read N- to C-terminus: 14-3-3-like protein (251 aa).

It belongs to the 14-3-3 family.

The sequence is that of 14-3-3-like protein from Fucus vesiculosus (Bladder wrack).